The following is a 28-amino-acid chain: Trypsin inhibitor A (28 aa).

Cystine bridges form between Cys3–Cys20, Cys10–Cys22, and Cys16–Cys27.

Belongs to the protease inhibitor I7 (squash-type serine protease inhibitor) family.

The protein localises to the secreted. In terms of biological role, inhibits trypsin. The protein is Trypsin inhibitor A of Momordica charantia (Bitter gourd).